A 166-amino-acid chain; its full sequence is Protein UL5 (166 aa).

This sequence belongs to the RL11 family. In terms of assembly, interacts with host IQGAP1.

The protein localises to the host cytoplasm. May play a role in rearrangement of cellular cytoskeleton towards an efficient viral assembly and spreading. The protein is Protein UL5 (UL5) of Human cytomegalovirus (strain AD169) (HHV-5).